The chain runs to 436 residues: Glutamate-1-semialdehyde 2,1-aminomutase (436 aa).

The residue at position 270 (Lys270) is an N6-(pyridoxal phosphate)lysine.

The protein belongs to the class-III pyridoxal-phosphate-dependent aminotransferase family. HemL subfamily. In terms of assembly, homodimer. The cofactor is pyridoxal 5'-phosphate.

The protein resides in the cytoplasm. It catalyses the reaction (S)-4-amino-5-oxopentanoate = 5-aminolevulinate. It functions in the pathway porphyrin-containing compound metabolism; protoporphyrin-IX biosynthesis; 5-aminolevulinate from L-glutamyl-tRNA(Glu): step 2/2. The polypeptide is Glutamate-1-semialdehyde 2,1-aminomutase (Cutibacterium acnes (strain DSM 16379 / KPA171202) (Propionibacterium acnes)).